The primary structure comprises 365 residues: Glycerol dehydrogenase (365 aa).

NAD(+) contacts are provided by D37, G94, K95, T116, and S119. D121 lines the glycerol pocket. Positions 125, 127, and 131 each coordinate NAD(+). Residues D171, H254, and H271 each coordinate Zn(2+). Position 254 (H254) interacts with glycerol.

The protein belongs to the iron-containing alcohol dehydrogenase family. Zn(2+) serves as cofactor.

It catalyses the reaction glycerol + NAD(+) = dihydroxyacetone + NADH + H(+). It functions in the pathway polyol metabolism; glycerol fermentation; glycerone phosphate from glycerol (oxidative route): step 1/2. Catalyzes the NAD-dependent oxidation of glycerol to dihydroxyacetone (glycerone). Allows microorganisms to utilize glycerol as a source of carbon under anaerobic conditions. This is Glycerol dehydrogenase (gldA) from Pseudomonas putida (Arthrobacter siderocapsulatus).